Consider the following 716-residue polypeptide: Exocyst complex component 8 (716 aa).

Ser15 carries the phosphoserine modification. The segment covering 110–119 (STGEDTAGAG) has biased composition (low complexity). The disordered stretch occupies residues 110–149 (STGEDTAGAGPRERGAAQAGFLPGPAGVPREGPGTGEEGK). A PH domain is found at 173 to 273 (YLVYNGDLVE…WLEVLEETKR (101 aa)). Basic and acidic residues predominate over residues 275-284 (LSDKRRREQE). The segment at 275–319 (LSDKRRREQEEAAALRAPPPVTSKGSNPFEDEAEEELATPEAEEE) is disordered. Positions 303-319 (FEDEAEEELATPEAEEE) are enriched in acidic residues. Thr313 carries the phosphothreonine modification.

This sequence belongs to the EXO84 family. The exocyst complex is composed of EXOC1, EXOC2, EXOC3, EXOC4, EXOC5, EXOC6, EXOC7 and EXOC8. Interacts (via PH domain) with GTP-bound RALA and RALB. Interacts with SH3BP1; required for the localization of both SH3BP1 and the exocyst to the leading edge of migrating cells.

It localises to the cytoplasm. It is found in the perinuclear region. Its subcellular location is the cell projection. The protein resides in the growth cone. In terms of biological role, component of the exocyst complex involved in the docking of exocytic vesicles with fusion sites on the plasma membrane. This Rattus norvegicus (Rat) protein is Exocyst complex component 8 (Exoc8).